Consider the following 438-residue polypeptide: Serine hydroxymethyltransferase (438 aa).

(6S)-5,6,7,8-tetrahydrofolate is bound by residues leucine 135 and 139–141 (GHL). Position 244 is an N6-(pyridoxal phosphate)lysine (lysine 244). Residues 361 to 383 (GVPNDPLPPVKTSGIRVGSPAGT) form a disordered region.

This sequence belongs to the SHMT family. As to quaternary structure, homodimer. The cofactor is pyridoxal 5'-phosphate.

The protein resides in the cytoplasm. It carries out the reaction (6R)-5,10-methylene-5,6,7,8-tetrahydrofolate + glycine + H2O = (6S)-5,6,7,8-tetrahydrofolate + L-serine. The protein operates within one-carbon metabolism; tetrahydrofolate interconversion. It participates in amino-acid biosynthesis; glycine biosynthesis; glycine from L-serine: step 1/1. Catalyzes the reversible interconversion of serine and glycine with tetrahydrofolate (THF) serving as the one-carbon carrier. This reaction serves as the major source of one-carbon groups required for the biosynthesis of purines, thymidylate, methionine, and other important biomolecules. Also exhibits THF-independent aldolase activity toward beta-hydroxyamino acids, producing glycine and aldehydes, via a retro-aldol mechanism. The protein is Serine hydroxymethyltransferase of Rhizorhabdus wittichii (strain DSM 6014 / CCUG 31198 / JCM 15750 / NBRC 105917 / EY 4224 / RW1) (Sphingomonas wittichii).